The sequence spans 603 residues: Growth-regulating factor 6 (603 aa).

The interval 34–58 is disordered; the sequence is KHGRGNAGDQEHEWRPPAKQARGGD. One can recognise a QLQ domain in the interval 158–193; that stretch reads PFTPSQWIELEHQALIYKYLAANSPVPHSLLIPIRR. One can recognise a WRC domain in the interval 223 to 267; it reads DPEPGRCRRTDGKKWRCSRDAVADQKYCERHMNRGRHRSRKHVEG. 2 consecutive short sequence motifs (bipartite nuclear localization signal) follow at residues 228–238 and 256–263; these read RCRRTDGKKWR and RGRHRSRK. Positions 561–571 are enriched in low complexity; that stretch reads FGSVSSSTGSS. The tract at residues 561 to 582 is disordered; it reads FGSVSSSTGSSPRLENHSVYDG.

This sequence belongs to the GRF family.

It is found in the nucleus. Transcription activator that plays a regulatory role in gibberellin-induced stem elongation. The sequence is that of Growth-regulating factor 6 (GRF6) from Oryza sativa subsp. japonica (Rice).